A 417-amino-acid polypeptide reads, in one-letter code: Serine hydroxymethyltransferase 3 (417 aa).

(6S)-5,6,7,8-tetrahydrofolate is bound by residues L121 and 125 to 127 (GHL). At K230 the chain carries N6-(pyridoxal phosphate)lysine. 355–357 (SPF) lines the (6S)-5,6,7,8-tetrahydrofolate pocket.

Belongs to the SHMT family. In terms of assembly, homodimer. Pyridoxal 5'-phosphate serves as cofactor.

Its subcellular location is the cytoplasm. It catalyses the reaction (6R)-5,10-methylene-5,6,7,8-tetrahydrofolate + glycine + H2O = (6S)-5,6,7,8-tetrahydrofolate + L-serine. Its pathway is one-carbon metabolism; tetrahydrofolate interconversion. It participates in amino-acid biosynthesis; glycine biosynthesis; glycine from L-serine: step 1/1. In terms of biological role, catalyzes the reversible interconversion of serine and glycine with tetrahydrofolate (THF) serving as the one-carbon carrier. This reaction serves as the major source of one-carbon groups required for the biosynthesis of purines, thymidylate, methionine, and other important biomolecules. Also exhibits THF-independent aldolase activity toward beta-hydroxyamino acids, producing glycine and aldehydes, via a retro-aldol mechanism. This chain is Serine hydroxymethyltransferase 3, found in Pseudomonas fluorescens (strain Pf0-1).